A 426-amino-acid polypeptide reads, in one-letter code: Vitamin D3 receptor (426 aa).

The nuclear receptor DNA-binding region spans 21 to 96 (PRICGVCGDR…IGMMKEFILT (76 aa)). Residues C24, C27, C41, C44, C60, C66, C76, and C79 each coordinate Zn(2+). NR C4-type zinc fingers lie at residues 24–44 (CGVC…CEGC) and 60–84 (CPFN…LKRC). The segment at 97–126 (DEEVQRKREMILKRKEEEALKDSLRPKLSE) is hinge. The region spanning 127–422 (EQQRIITTLL…LTPLLFEVFG (296 aa)) is the NR LBD domain. Y143 lines the calcitriol pocket. A disordered region spans residues 147–215 (YSDFSQFRPP…NEEDSDDPSV (69 aa)). Residues 175-191 (SFSGNSSSSCSDHCTSS) show a composition bias toward low complexity. The span at 192–204 (PDTMEPTSFSNQD) shows a compositional bias: polar residues. S235 serves as a coordination point for calcitriol. The interaction with coactivator LXXLL motif stretch occupies residues 244–262 (KMIPGFRDLTPEDQIVLLK). Calcitriol contacts are provided by R272, S276, H304, and H396. The 9aaTAD motif lies at 415–423 (PLLFEVFGN).

This sequence belongs to the nuclear hormone receptor family. NR1 subfamily. Homodimer in the absence of bound vitamin D3. Heterodimer with RXRA after vitamin D3 binding. Interacts with MED1, NCOA1, NCOA2, NCOA3 and NCOA6 coactivators, leading to a strong increase of transcription of target genes. Interacts with the corepressor NCOR1. Interacts with SNW1. Interacts with IRX4, the interaction does not affect its transactivation activity. Interacts with CRY1. Interacts with CRY2 in a ligand-dependent manner. In terms of processing, ubiquitinated by UBR5, leading to its degradation: UBR5 specifically recognizes and binds ligand-bound VDR when it is not associated with coactivators (NCOAs). In presence of NCOAs, the UBR5-degron is not accessible, preventing its ubiquitination and degradation. Mammary gland, expression increases during lactation. Also found in colon, expression is down-regulated at parturition.

Its subcellular location is the nucleus. The protein resides in the cytoplasm. Its function is as follows. Nuclear receptor for calcitriol, the active form of vitamin D3 which mediates the action of this vitamin on cells. Enters the nucleus upon vitamin D3 binding where it forms heterodimers with the retinoid X receptor/RXR. The VDR-RXR heterodimers bind to specific response elements on DNA and activate the transcription of vitamin D3-responsive target genes. Plays a central role in calcium homeostasis. Also functions as a receptor for the secondary bile acid lithocholic acid (LCA) and its metabolites. The polypeptide is Vitamin D3 receptor (VDR) (Bos taurus (Bovine)).